The primary structure comprises 530 residues: RNA-binding protein 39 (530 aa).

The disordered stretch occupies residues 1–146 (MADDIDIEAM…PVREPIDNLT (146 aa)). Ala-2 carries the N-acetylalanine modification. The segment covering 14-32 (PYKKDENKLNSANGHEERS) has biased composition (basic and acidic residues). Composition is skewed to basic residues over residues 33–56 (KKRK…KERK) and 64–95 (KKSK…RGRY). Tyr-95 is modified (phosphotyrosine). Ser-97 and Ser-100 each carry phosphoserine. Lys-111 participates in a covalent cross-link: Glycyl lysine isopeptide (Lys-Gly) (interchain with G-Cter in SUMO2). Ser-117 carries the post-translational modification Phosphoserine. A Glycyl lysine isopeptide (Lys-Gly) (interchain with G-Cter in SUMO2) cross-link involves residue Lys-119. Positions 119-130 (KLSRRRSRSKSP) are enriched in basic residues. Phosphoserine occurs at positions 121 and 136. Basic and acidic residues predominate over residues 131–146 (FRKDKSPVREPIDNLT). Thr-146 is subject to Phosphothreonine. The 78-residue stretch at 153-230 (RTVFCMQLAA…VPIIVQASQA (78 aa)) folds into the RRM 1 domain. A Glycyl lysine isopeptide (Lys-Gly) (interchain with G-Cter in SUMO2) cross-link involves residue Lys-244. The RRM 2 domain occupies 250-328 (MRLYVGSLHF…RPMKVGHVTE (79 aa)). Residues 291–355 (KGYGFITFSD…RTGIDLGTTG (65 aa)) form an activating domain region. Positions 291-406 (KGYGFITFSD…IDLQTRLSQQ (116 aa)) are interaction with JUN. Ser-334, Ser-337, and Ser-341 each carry phosphoserine. The interaction with ESR1 and ESR2 stretch occupies residues 355 to 406 (GRLQLMARLAEGTGLQIPPAAQQALQMSGSLAFGAVAEFSFVIDLQTRLSQQ). An interaction with NCOA6 region spans residues 406–530 (QTEASALAAA…ATQLLVPSRR (125 aa)). In terms of domain architecture, RRM 3 spans 445–508 (EIKDDVIEEC…KMITAAYVPL (64 aa)).

This sequence belongs to the splicing factor SR family. As to quaternary structure, interacts with NCOA6 and JUN. Interacts with ESR1 and ESR2, in the presence of estradiol (E2). Interacts with RSRC1 (via Arg/Ser-rich domain). Interacts with SF3B1. Interacts with ZNF106 (via N-terminus).

The protein localises to the nucleus. Functionally, RNA-binding protein that acts as a pre-mRNA splicing factor. Acts by promoting exon inclusion via regulation of exon cassette splicing. Also acts as a transcriptional coactivator for steroid nuclear receptors ESR1/ER-alpha and ESR2/ER-beta, and JUN/AP-1, independently of the pre-mRNA splicing factor activity. The chain is RNA-binding protein 39 (Rbm39) from Mus musculus (Mouse).